A 350-amino-acid polypeptide reads, in one-letter code: Aldo-keto reductase 1B (350 aa).

Tyr84 serves as the catalytic Proton donor. His146 serves as a coordination point for substrate. 244 to 306 (SPLGSPNRPW…SVTKDRIESN (63 aa)) contributes to the NADP(+) binding site.

This sequence belongs to the aldo/keto reductase family.

The protein localises to the cytoplasm. It catalyses the reaction an alditol + NADP(+) = an aldose + NADPH + H(+). It carries out the reaction all-trans-retinol + NADP(+) = all-trans-retinal + NADPH + H(+). The catalysed reaction is 9-cis-retinol + NADP(+) = 9-cis-retinal + NADPH + H(+). The enzyme catalyses 13-cis-retinol + NADP(+) = 13-cis-retinal + NADPH + H(+). It catalyses the reaction glycerol + NADP(+) = D-glyceraldehyde + NADPH + H(+). It carries out the reaction glycerol + NADP(+) = L-glyceraldehyde + NADPH + H(+). The catalysed reaction is prenol + NADP(+) = 3-methyl-2-butenal + NADPH + H(+). The enzyme catalyses (E)-hex-2-en-1-ol + NADP(+) = (E)-hex-2-enal + NADPH + H(+). It catalyses the reaction (E,E)-2,4-hexadien-1-ol + NADP(+) = (E,E)-2,4-hexadienal + NADPH + H(+). It carries out the reaction a 4-hydroxynonen-1-ol + NADP(+) = a 4-hydroxynonenal + NADPH + H(+). The catalysed reaction is prostaglandin F2alpha + NADP(+) = prostaglandin H2 + NADPH + H(+). The enzyme catalyses allyl alcohol + NADP(+) = acrolein + NADPH + H(+). It catalyses the reaction pyridine 3-methanol + NADP(+) = pyridine-3-carbaldehyde + NADPH + H(+). It carries out the reaction 1-hexadecanoyl-2-(5-oxopentanoyl)-sn-glycero-3-phosphocholine + NADPH + H(+) = 1-hexadecanoyl-2-(5-hydroxypentanoyl)-sn-glycero-3-phosphocholine + NADP(+). The catalysed reaction is 1-hexadecanoyl-2-(7-oxoheptanoyl)-sn-glycero-3-phosphocholine + NADPH + H(+) = 1-hexadecanoyl-2-(7-hydroxyheptanoyl)-sn-glycero-3-phosphocholine + NADP(+). The enzyme catalyses 1-hexadecanoyl-2-(9-oxononanoyl)-sn-glycero-3-phosphocholine + NADPH + H(+) = 1-hexadecanoyl-2-(9-hydroxynonanoyl)-sn-glycero-3-phosphocholine + NADP(+). It catalyses the reaction 1-hexadecanoyl-2-(5-oxopentanoyl)-sn-glycero-3-phosphoethanolamine + NADPH + H(+) = 1-hexadecanoyl-2-(5-hydroxypentanoyl)-sn-glycero-3-phosphoethanolamine + NADP(+). Catalyzes the NADPH-dependent reduction of a wide variety of carbonyl-containing compounds to their corresponding alcohols. Displays enzymatic activity towards endogenous metabolites such as aromatic and aliphatic aldehydes, ketones, monosaccharides, bile acids and xenobiotics substrates. Key enzyme in the polyol pathway, catalyzes reduction of glucose to sorbitol during hyperglycemia. Reduces steroids and their derivatives and prostaglandins. Through production of prostaglandin F2alpha may regulate the activity of non-muscle myosin II in an autocrine or paracrine fashion; influences border cell and nurse cell stiffness to facilitate border cell cluster migration. Also regulates the cell surface localization of integrins in an autocrine or paracrine fashion; influences border cell adhesion to maintain border cell cluster morphology. In hemocytes, probably contributes to production of sugar alcohols in the hemolymph, which act as alarmins involved in gut-fat body innate immunological communication (GFIC); leads to activation of the imd/Relish signaling pathway in the fat body. The protein is Aldo-keto reductase 1B of Drosophila melanogaster (Fruit fly).